Consider the following 1481-residue polypeptide: Cystic fibrosis transmembrane conductance regulator (1481 aa).

At 1 to 77 the chain is on the cytoplasmic side; that stretch reads MQKSPLVKAS…KLINALRRCF (77 aa). The helical transmembrane segment at 78 to 98 threads the bilayer; sequence LWRFIFYGILLYLGEVTKAVQ. The region spanning 81–365 is the ABC transmembrane type-1 1 domain; sequence FIFYGILLYL…GAVQTWYDSL (285 aa). Residues 99-122 are Extracellular-facing; sequence PLLLGRIIASYDPDNKEERSIAIY. A helical membrane pass occupies residues 123–146; sequence LAIGLCLLFIVRTLLLHPAIFGLQ. Residues 147 to 195 are Cytoplasmic-facing; it reads HIGMQMRIAMFSLIYKKTLKLSSRVLDKISIGQLVSLLSNNLNKFDEGL. A helical transmembrane segment spans residues 196–216; the sequence is ALAHFVWIAPLQVTLLMGLLW. Over 217 to 222 the chain is Extracellular; sequence DLLQAS. A helical membrane pass occupies residues 223-243; sequence AFCGLAVLIVLALFQAWLGKM. Residues 244–298 are Cytoplasmic-facing; the sequence is MMKYRDQRAGKINERLVITSEMIENIQSVKAYCWEEAMEKMIENLRQTELKLTRK. The chain crosses the membrane as a helical span at residues 299 to 319; it reads AAYMRYFNSAAFFFSGFFVVF. The Extracellular portion of the chain corresponds to 320–339; it reads LSVLPYAFLQGIILRKIFTT. The chain crosses the membrane as a helical span at residues 340 to 358; it reads ISFCIVLRMAITRQFPGAV. At 359-859 the chain is on the cytoplasmic side; it reads QTWYDSLGAI…YLRYITVHKS (501 aa). ATP contacts are provided by residues Trp401, Ser435, 459–466, and Gln494; that span reads GSTGAGKT. Residues 424–647 enclose the ABC transporter 1 domain; that stretch reads NGDNKLFFSN…RPDFSSKLMG (224 aa). Cys525 is lipidated: S-palmitoyl cysteine. Ser550 carries the phosphoserine modification. The segment at 655 to 832 is disordered R region; the sequence is SAERRNSILT…EEINEEDLKE (178 aa). Residues Ser661 and Ser671 each carry the phosphoserine; by PKA modification. Ser687 is subject to Phosphoserine; by PKC. Lys689 is covalently cross-linked (Glycyl lysine isopeptide (Lys-Gly) (interchain with G-Cter in ubiquitin)). A phosphoserine; by PKA mark is found at Ser701 and Ser713. Thr718 bears the Phosphothreonine mark. Ser738, Ser769, Ser796, and Ser814 each carry phosphoserine; by PKA. A helical membrane pass occupies residues 860 to 880; sequence LILVLIWCLIIFLAEVAASLV. One can recognise an ABC transmembrane type-1 2 domain in the interval 860–1156; that stretch reads LILVLIWCLI…AVNSSIDVDS (297 aa). At 881–919 the chain is on the extracellular side; it reads VLWLLKNNTPQQEMNSTQSGNRSYPVIITNTSFYYIFYI. N-linked (GlcNAc...) asparagine glycosylation is found at Asn895 and Asn901. The chain crosses the membrane as a discontinuously helical span at residues 920–940; it reads YVGVADTLLALGLFRGLPLVH. At 941 to 991 the chain is on the cytoplasmic side; that stretch reads TLITVSKILHHKMLRSVLQAPMSTLNALKAGGILNRFSKDIAILDDLLPLT. The helical transmembrane segment at 992-1012 threads the bilayer; that stretch reads IFDFIQLLLIVIGAIAVVSVL. The Extracellular portion of the chain corresponds to 1013–1014; that stretch reads QP. The chain crosses the membrane as a helical span at residues 1015-1035; it reads YIFLATVPVIAAFIMLRAYFL. Residues 1036–1096 lie on the Cytoplasmic side of the membrane; it reads HTSQQLKQLE…TANWFLYLST (61 aa). Residues 1097-1117 form a helical membrane-spanning segment; that stretch reads LRWFQMRIEMIFVIFFIAVTF. Residues 1118–1131 are Extracellular-facing; sequence ISILTTGEGQGSVG. A helical membrane pass occupies residues 1132-1152; that stretch reads IILTLAMNIMSTLQWAVNSSI. Topologically, residues 1153 to 1481 are cytoplasmic; sequence DVDSLMRSVS…TEEEVQETRL (329 aa). The region spanning 1211–1444 is the ABC transporter 2 domain; that stretch reads MIVKDLTAKY…KSLFRQAISS (234 aa). Residues Tyr1220 and 1245–1252 each bind ATP; that span reads GRTGSGKS. Residues 1387 to 1481 form an interaction with GORASP2 region; it reads RTIKQAFADC…TEEEVQETRL (95 aa). Residue Cys1396 is the site of S-palmitoyl cysteine attachment. 2 positions are modified to phosphoserine: Ser1445 and Ser1457. A compositionally biased stretch (basic residues) spans 1453–1462; that stretch reads HRNSSKHKSR. The disordered stretch occupies residues 1453–1481; the sequence is HRNSSKHKSRSQITALKEETEEEVQETRL. Over residues 1471-1481 the composition is skewed to acidic residues; that stretch reads ETEEEVQETRL. The PDZ-binding signature appears at 1479–1481; it reads TRL.

Belongs to the ABC transporter superfamily. ABCC family. CFTR transporter (TC 3.A.1.202) subfamily. As to quaternary structure, monomer; does not require oligomerization for channel activity. May form oligomers in the membrane. Interacts with SLC26A3, SLC26A6 and NHERF1. Interacts with SHANK2. Interacts with MYO6. Interacts (via C-terminus) with GOPC (via PDZ domain); this promotes CFTR internalization and thereby decreases channel activity. Interacts with SLC4A7 through NHERF1. Found in a complex with MYO5B and RAB11A. Interacts with ANO1. Interacts with SLC26A8. Interacts with AHCYL1; the interaction increases CFTR activity. Interacts with CSE1L. The core-glycosylated form interacts with GORASP2 (via PDZ GRASP-type 1 domain) in respone to ER stress. Interacts with MARCHF2; the interaction leads to CFTR ubiqtuitination and degradation. Interacts with ADGRG2. Post-translationally, N-glycosylated. Phosphorylated; cAMP treatment promotes phosphorylation and activates the channel. Dephosphorylation decreases the ATPase activity (in vitro). Phosphorylation at PKA sites activates the channel. Phosphorylation at PKC sites enhances the response to phosphorylation by PKA. Phosphorylated by AMPK; this inhibits channel activity. In terms of processing, ubiquitinated, leading to its degradation in the lysosome. Deubiquitination by USP10 in early endosomes enhances its endocytic recycling to the cell membrane. Ubiquitinated by RNF185 during ER stress. Ubiquitinated by MARCHF2.

It is found in the apical cell membrane. Its subcellular location is the early endosome membrane. It localises to the cell membrane. The protein localises to the recycling endosome membrane. The protein resides in the endoplasmic reticulum membrane. It is found in the nucleus. It catalyses the reaction ATP + H2O + closed Cl(-) channel = ADP + phosphate + open Cl(-) channel.. It carries out the reaction chloride(in) = chloride(out). The catalysed reaction is hydrogencarbonate(in) = hydrogencarbonate(out). The enzyme catalyses ATP + H2O = ADP + phosphate + H(+). Functionally, epithelial ion channel that plays an important role in the regulation of epithelial ion and water transport and fluid homeostasis. Mediates the transport of chloride ions across the cell membrane. Possesses an intrinsic ATPase activity and utilizes ATP to gate its channel; the passive flow of anions through the channel is gated by cycles of ATP binding and hydrolysis by the ATP-binding domains. The ion channel is also permeable to HCO(3)(-); selectivity depends on the extracellular chloride concentration. Exerts its function also by modulating the activity of other ion channels and transporters. Contributes to the regulation of the pH and the ion content of the epithelial fluid layer. Modulates the activity of the epithelial sodium channel (ENaC) complex, in part by regulating the cell surface expression of the ENaC complex. May regulate bicarbonate secretion and salvage in epithelial cells by regulating the transporter SLC4A7. Can inhibit the chloride channel activity of ANO1. Plays a role in the chloride and bicarbonate homeostasis during sperm epididymal maturation and capacitation. The polypeptide is Cystic fibrosis transmembrane conductance regulator (Cavia porcellus (Guinea pig)).